Reading from the N-terminus, the 917-residue chain is DNA mismatch repair protein spellchecker 1 (917 aa).

667-674 (GPNMGGKS) contributes to the ATP binding site.

It belongs to the DNA mismatch repair MutS family. As to quaternary structure, heterodimer of Msh2/Spel and Msh6.

It is found in the nucleus. Involved in postreplication mismatch repair. Binds specifically to DNA containing mismatched nucleotides thus providing a target for the excision repair processes characteristic of postreplication mismatch repair. In Drosophila melanogaster (Fruit fly), this protein is DNA mismatch repair protein spellchecker 1 (spel1).